The sequence spans 637 residues: Chaperone protein HtpG (637 aa).

The segment at 1–345 (MSQQETHGFQ…SNDLPLNVSR (345 aa)) is a; substrate-binding. The tract at residues 346 to 562 (EILQDNHITK…EGEMSSQMIK (217 aa)) is b. Positions 563 to 637 (LMQAAGQPVP…MNQMLLANLK (75 aa)) are c.

This sequence belongs to the heat shock protein 90 family. In terms of assembly, homodimer.

Its subcellular location is the cytoplasm. Functionally, molecular chaperone. Has ATPase activity. The sequence is that of Chaperone protein HtpG from Shewanella sp. (strain MR-4).